Here is a 123-residue protein sequence, read N- to C-terminus: Large ribosomal subunit protein bL12 (123 aa).

Belongs to the bacterial ribosomal protein bL12 family. In terms of assembly, homodimer. Part of the ribosomal stalk of the 50S ribosomal subunit. Forms a multimeric L10(L12)X complex, where L10 forms an elongated spine to which 2 to 4 L12 dimers bind in a sequential fashion. Binds GTP-bound translation factors.

Its function is as follows. Forms part of the ribosomal stalk which helps the ribosome interact with GTP-bound translation factors. Is thus essential for accurate translation. The polypeptide is Large ribosomal subunit protein bL12 (Psychrobacter arcticus (strain DSM 17307 / VKM B-2377 / 273-4)).